The sequence spans 618 residues: UvrABC system protein C (618 aa).

One can recognise a GIY-YIG domain in the interval Thr20–Val98. Positions Asp207 to Met242 constitute a UVR domain.

It belongs to the UvrC family. In terms of assembly, interacts with UvrB in an incision complex.

Its subcellular location is the cytoplasm. Its function is as follows. The UvrABC repair system catalyzes the recognition and processing of DNA lesions. UvrC both incises the 5' and 3' sides of the lesion. The N-terminal half is responsible for the 3' incision and the C-terminal half is responsible for the 5' incision. The sequence is that of UvrABC system protein C from Xanthomonas campestris pv. campestris (strain 8004).